The primary structure comprises 332 residues: Glycerol-3-phosphate dehydrogenase [NAD(P)+] (332 aa).

NADPH contacts are provided by Trp11, Arg30, and Lys108. Sn-glycerol 3-phosphate is bound by residues Lys108, Gly137, and Ser139. Residue Ala141 coordinates NADPH. Sn-glycerol 3-phosphate is bound by residues Lys192, Asp245, Ser255, Arg256, and Asn257. The Proton acceptor role is filled by Lys192. Arg256 serves as a coordination point for NADPH. Val280 and Glu282 together coordinate NADPH.

It belongs to the NAD-dependent glycerol-3-phosphate dehydrogenase family.

The protein localises to the cytoplasm. It carries out the reaction sn-glycerol 3-phosphate + NAD(+) = dihydroxyacetone phosphate + NADH + H(+). It catalyses the reaction sn-glycerol 3-phosphate + NADP(+) = dihydroxyacetone phosphate + NADPH + H(+). The protein operates within membrane lipid metabolism; glycerophospholipid metabolism. Its function is as follows. Catalyzes the reduction of the glycolytic intermediate dihydroxyacetone phosphate (DHAP) to sn-glycerol 3-phosphate (G3P), the key precursor for phospholipid synthesis. The chain is Glycerol-3-phosphate dehydrogenase [NAD(P)+] from Burkholderia pseudomallei (strain 1710b).